The sequence spans 475 residues: MASKPSIPKGTRDFSPAEVSKRQYIIQTIKANFEKFGFQPIETPSFENSDTLMGKYGEEGDRLIFKILNSGNFFYNKSKIELPESIEELQLNSAEKITLEQRIELNKFTGKISEKALRYDLTVPFARYVVQHQSEIEFPFKRYQIQPVWRADNPQKGRFREFFQCDADVVGSKSLWQEVELVQLYDTVFTSLGLEGVTIKINNRKILSGIAEVIGASDKLIDFTVALDKLDKIGEDGVKKEMIEKGISEDALVKVQPLFNFSGTFADKIAQLSDLLSSSEEGMKGVEELKFICDNVADLGLSTAVLDLDVTLARGLNYYTGAIFEVAAPKTVAMGSIGGGGRYDDLTGIFGLKNMSGVGISFGLDRIYLVLEELQLFPETVAATSKAIFLNFGDKEALYASKAIQKLRQENIKVELYPDNVKVGKQFQYADKRLIPFAVLVGDQEINSNSYALKNLVTGEQVSVDFEGLKKTLLG.

This sequence belongs to the class-II aminoacyl-tRNA synthetase family. In terms of assembly, homodimer.

Its subcellular location is the cytoplasm. It carries out the reaction tRNA(His) + L-histidine + ATP = L-histidyl-tRNA(His) + AMP + diphosphate + H(+). The sequence is that of Histidine--tRNA ligase from Flavobacterium johnsoniae (strain ATCC 17061 / DSM 2064 / JCM 8514 / BCRC 14874 / CCUG 350202 / NBRC 14942 / NCIMB 11054 / UW101) (Cytophaga johnsonae).